A 311-amino-acid chain; its full sequence is 4-hydroxyproline 2-epimerase (311 aa).

The active-site Proton acceptor is the cysteine 89. Residues 90–91 (GH), histidine 209, and aspartate 233 contribute to the substrate site. Catalysis depends on cysteine 237, which acts as the Proton donor. Residue 238 to 239 (GT) participates in substrate binding.

The protein belongs to the proline racemase family.

It carries out the reaction trans-4-hydroxy-L-proline = cis-4-hydroxy-D-proline. Catalyzes the epimerization of trans-4-hydroxy-L-proline (t4LHyp) to cis-4-hydroxy-D-proline (c4DHyp). Is likely involved in a degradation pathway that converts t4LHyp to alpha-ketoglutarate. Displays no proline racemase activity. This chain is 4-hydroxyproline 2-epimerase, found in Burkholderia ambifaria (strain ATCC BAA-244 / DSM 16087 / CCUG 44356 / LMG 19182 / AMMD) (Burkholderia cepacia (strain AMMD)).